Reading from the N-terminus, the 283-residue chain is Elongation factor Ts (283 aa).

The segment at 80–83 (TDFV) is involved in Mg(2+) ion dislocation from EF-Tu.

Belongs to the EF-Ts family.

It localises to the cytoplasm. Associates with the EF-Tu.GDP complex and induces the exchange of GDP to GTP. It remains bound to the aminoacyl-tRNA.EF-Tu.GTP complex up to the GTP hydrolysis stage on the ribosome. The chain is Elongation factor Ts from Salmonella gallinarum (strain 287/91 / NCTC 13346).